Here is a 1178-residue protein sequence, read N- to C-terminus: Ubiquitin carboxyl-terminal hydrolase cyk-3 (1178 aa).

3 EF-hand domains span residues 28–60, 175–210, and 211–246; these read EEYR…GAQI, FPDS…LCRG, and PLPG…LNVP. Residues D188, N190, D192, Q194, E199, D224, D226, D228, and E235 each coordinate Ca(2+). Positions 296–410 constitute a DUSP domain; sequence ESRKMELQIV…VDSQFTRKYL (115 aa). Residues 570–1175 enclose the USP domain; sequence VGLVNYGNFC…GAYLLFYERK (606 aa). The active-site Nucleophile is the C579. The interval 681–725 is disordered; the sequence is SNKSLHPSPEESEGTDSNKLSDSSKKKEADKEEADEEKAERSWTE. H1134 (proton acceptor) is an active-site residue.

It belongs to the peptidase C19 family. In terms of tissue distribution, expressed in excretory cells, coelomocytes, head neurons, hypodermal cells, germ cells, oocytes, sperm and pharynx (at protein level).

Its subcellular location is the nucleus. The protein localises to the cytoplasm. It is found in the cytoskeleton. The protein resides in the microtubule organizing center. It catalyses the reaction Thiol-dependent hydrolysis of ester, thioester, amide, peptide and isopeptide bonds formed by the C-terminal Gly of ubiquitin (a 76-residue protein attached to proteins as an intracellular targeting signal).. In terms of biological role, ubiquitin-protein hydrolase which cleaves ubiquitin from ubiquitinated proteins. Plays a role in embryo osmoregulation. Probably by regulating osmosis, controls actin redistribution in the 1-cell embryos and thus actin-dependent processes such as cytokinesis and P-granules segregation. During the first embryonic mitotic division, involved in the formation of a functional microtubule organizing center provided by the male pronucleus. Acts as a positive regulator of the mTORC1 signaling. The polypeptide is Ubiquitin carboxyl-terminal hydrolase cyk-3 (Caenorhabditis elegans).